We begin with the raw amino-acid sequence, 173 residues long: ATP synthase subunit b (173 aa).

Residues L15–A35 form a helical membrane-spanning segment.

It belongs to the ATPase B chain family. In terms of assembly, F-type ATPases have 2 components, F(1) - the catalytic core - and F(0) - the membrane proton channel. F(1) has five subunits: alpha(3), beta(3), gamma(1), delta(1), epsilon(1). F(0) has three main subunits: a(1), b(2) and c(10-14). The alpha and beta chains form an alternating ring which encloses part of the gamma chain. F(1) is attached to F(0) by a central stalk formed by the gamma and epsilon chains, while a peripheral stalk is formed by the delta and b chains.

The protein resides in the cell membrane. Its function is as follows. F(1)F(0) ATP synthase produces ATP from ADP in the presence of a proton or sodium gradient. F-type ATPases consist of two structural domains, F(1) containing the extramembraneous catalytic core and F(0) containing the membrane proton channel, linked together by a central stalk and a peripheral stalk. During catalysis, ATP synthesis in the catalytic domain of F(1) is coupled via a rotary mechanism of the central stalk subunits to proton translocation. In terms of biological role, component of the F(0) channel, it forms part of the peripheral stalk, linking F(1) to F(0). This is ATP synthase subunit b from Pediococcus pentosaceus (strain ATCC 25745 / CCUG 21536 / LMG 10740 / 183-1w).